The sequence spans 379 residues: ATP phosphoribosyltransferase regulatory subunit (379 aa).

Belongs to the class-II aminoacyl-tRNA synthetase family. HisZ subfamily. Heteromultimer composed of HisG and HisZ subunits.

It localises to the cytoplasm. Its pathway is amino-acid biosynthesis; L-histidine biosynthesis; L-histidine from 5-phospho-alpha-D-ribose 1-diphosphate: step 1/9. In terms of biological role, required for the first step of histidine biosynthesis. May allow the feedback regulation of ATP phosphoribosyltransferase activity by histidine. This Gluconobacter oxydans (strain 621H) (Gluconobacter suboxydans) protein is ATP phosphoribosyltransferase regulatory subunit.